We begin with the raw amino-acid sequence, 150 residues long: Large ribosomal subunit protein bL9 (150 aa).

It belongs to the bacterial ribosomal protein bL9 family.

Its function is as follows. Binds to the 23S rRNA. This Yersinia pseudotuberculosis serotype I (strain IP32953) protein is Large ribosomal subunit protein bL9.